Here is a 245-residue protein sequence, read N- to C-terminus: Probable octanoyltransferase 2 (245 aa).

The 190-residue stretch at 38-227 (MEYKPVLYFQ…SIEKEFDIKE (190 aa)) folds into the BPL/LPL catalytic domain. Substrate-binding positions include 89 to 96 (RGGYETYH), 157 to 159 (SIG), and 170 to 172 (GMA). Cys188 serves as the catalytic Acyl-thioester intermediate.

It belongs to the LipB family.

The protein localises to the cytoplasm. It catalyses the reaction octanoyl-[ACP] + L-lysyl-[protein] = N(6)-octanoyl-L-lysyl-[protein] + holo-[ACP] + H(+). Its pathway is protein modification; protein lipoylation via endogenous pathway; protein N(6)-(lipoyl)lysine from octanoyl-[acyl-carrier-protein]: step 1/2. Its function is as follows. Catalyzes the transfer of endogenously produced octanoic acid from octanoyl-acyl-carrier-protein onto the lipoyl domains of lipoate-dependent enzymes. Lipoyl-ACP can also act as a substrate although octanoyl-ACP is likely to be the physiological substrate. The polypeptide is Probable octanoyltransferase 2 (Picrophilus torridus (strain ATCC 700027 / DSM 9790 / JCM 10055 / NBRC 100828 / KAW 2/3)).